Reading from the N-terminus, the 339-residue chain is Ketol-acid reductoisomerase (NADP(+)) (339 aa).

The KARI N-terminal Rossmann domain occupies 1–182 (MRVYYDRDAD…GGGRAGIIET (182 aa)). NADP(+) is bound by residues 24-27 (YGSQ), Arg48, Ser51, Ser53, and 83-86 (DELQ). The active site involves His108. Position 134 (Gly134) interacts with NADP(+). In terms of domain architecture, KARI C-terminal knotted spans 183-328 (TFREECETDL…AKLRDMMPWI (146 aa)). Positions 191, 195, 227, and 231 each coordinate Mg(2+). Residue Ser252 coordinates substrate.

The protein belongs to the ketol-acid reductoisomerase family. Mg(2+) serves as cofactor.

The enzyme catalyses (2R)-2,3-dihydroxy-3-methylbutanoate + NADP(+) = (2S)-2-acetolactate + NADPH + H(+). It catalyses the reaction (2R,3R)-2,3-dihydroxy-3-methylpentanoate + NADP(+) = (S)-2-ethyl-2-hydroxy-3-oxobutanoate + NADPH + H(+). Its pathway is amino-acid biosynthesis; L-isoleucine biosynthesis; L-isoleucine from 2-oxobutanoate: step 2/4. It participates in amino-acid biosynthesis; L-valine biosynthesis; L-valine from pyruvate: step 2/4. Its function is as follows. Involved in the biosynthesis of branched-chain amino acids (BCAA). Catalyzes an alkyl-migration followed by a ketol-acid reduction of (S)-2-acetolactate (S2AL) to yield (R)-2,3-dihydroxy-isovalerate. In the isomerase reaction, S2AL is rearranged via a Mg-dependent methyl migration to produce 3-hydroxy-3-methyl-2-ketobutyrate (HMKB). In the reductase reaction, this 2-ketoacid undergoes a metal-dependent reduction by NADPH to yield (R)-2,3-dihydroxy-isovalerate. The polypeptide is Ketol-acid reductoisomerase (NADP(+)) (Rhodopseudomonas palustris (strain BisB18)).